The primary structure comprises 138 residues: Transcriptional regulator MraZ (138 aa).

2 SpoVT-AbrB domains span residues 3 to 45 (EFQH…PLAE) and 74 to 117 (ATEC…AAER).

Belongs to the MraZ family. In terms of assembly, forms oligomers.

Its subcellular location is the cytoplasm. The protein localises to the nucleoid. The sequence is that of Transcriptional regulator MraZ from Symbiobacterium thermophilum (strain DSM 24528 / JCM 14929 / IAM 14863 / T).